The chain runs to 310 residues: Leucine carboxyl methyltransferase 1 (310 aa).

Residues Arg50, Gly75, Asp100, 145–146 (DI), and Glu169 each bind S-adenosyl-L-methionine.

This sequence belongs to the methyltransferase superfamily. LCMT family.

The catalysed reaction is [phosphatase 2A protein]-C-terminal L-leucine + S-adenosyl-L-methionine = [phosphatase 2A protein]-C-terminal L-leucine methyl ester + S-adenosyl-L-homocysteine. Methylates the carboxyl group of the C-terminal leucine residue of protein phosphatase 2A catalytic subunits to form alpha-leucine ester residues. The protein is Leucine carboxyl methyltransferase 1 (ppm1) of Schizosaccharomyces pombe (strain 972 / ATCC 24843) (Fission yeast).